The primary structure comprises 389 residues: MNIHEYQGKEIFRSMGVAVPNGSVAYTPEEAVEVAKGLKEGVYVVKAQIHAGGRGKAGGVKIAKSLDEVESYAKELLGKVLVTHQTGPEGKEVKRLLVEEGCDIKKEYYLGFVLDRATDSVVLMGSEEGGTEIEEVAEATPEKIFKEVIDPVVGLMPYQARRLAFNINIPKESVNKAVKIMLGLYDVFMKKDASIIEINPLVTTGDGEVLALDAKINFDANALFRQKDVMELRDLDEEDPKEIEASKYDLSYIALDGNIGCMVNGAGLAMATMDTINHFGGNPANFLDVGGGATKEKVTEAFKIILGDEKVEGIFVNIFGGIMKCDVIAEGVVAAAKELELTIPLVVRLEGTNVDQGKEILGNSGLAITPASTMAEGAQKIVELVKEAK.

The ATP-grasp domain occupies 9–244 (KEIFRSMGVA…LDEEDPKEIE (236 aa)). Residues lysine 46, 53–55 (GRG), glutamate 99, cysteine 102, and glutamate 107 each bind ATP. Residues asparagine 199 and aspartate 213 each coordinate Mg(2+). Residues asparagine 264 and 321–323 (GIM) each bind substrate.

Belongs to the succinate/malate CoA ligase beta subunit family. Heterotetramer of two alpha and two beta subunits. The cofactor is Mg(2+).

The catalysed reaction is succinate + ATP + CoA = succinyl-CoA + ADP + phosphate. It catalyses the reaction GTP + succinate + CoA = succinyl-CoA + GDP + phosphate. It participates in carbohydrate metabolism; tricarboxylic acid cycle; succinate from succinyl-CoA (ligase route): step 1/1. Functionally, succinyl-CoA synthetase functions in the citric acid cycle (TCA), coupling the hydrolysis of succinyl-CoA to the synthesis of either ATP or GTP and thus represents the only step of substrate-level phosphorylation in the TCA. The beta subunit provides nucleotide specificity of the enzyme and binds the substrate succinate, while the binding sites for coenzyme A and phosphate are found in the alpha subunit. The chain is Succinate--CoA ligase [ADP-forming] subunit beta from Macrococcus caseolyticus (strain JCSC5402) (Macrococcoides caseolyticum).